A 1421-amino-acid polypeptide reads, in one-letter code: Cytoadherence-linked asexual protein 3.2 (1421 aa).

The N-terminal stretch at 1–24 (MVSFFKTPIIIFFFLLCLNEKVLC) is a signal peptide. 4 cysteine pairs are disulfide-bonded: C335/C363, C409/C415, C519/C547, and C523/C544. A helical transmembrane segment spans residues 1203–1223 (NFFMELANGFMYAFCFFAISQ). A disulfide bridge connects residues C1352 and C1355. The tract at residues 1371-1413 (GDKNTNETTEIKKQTSTYIDTEKMNEADSADSDDEKDFDTPDN) is disordered. Over residues 1398 to 1412 (DSADSDDEKDFDTPD) the composition is skewed to acidic residues.

Component of the RhopH complex. RhopH complex is at least composed of CLAG3.1/CLAG3.2, RhopH2 and RhopH3 with a 1:1:1 subunit stoichiometry. CLAG3.1/CLAG3.2 mediates subunit association through independent contacts with RhopH2 and RhopH3, which do not directly interact with one another. Interacts with RhopH2. Interacts with RhopH3.

The protein localises to the host cell membrane. Its subcellular location is the parasitophorous vacuole membrane. The protein resides in the host cytoplasm. It localises to the cytoplasmic vesicle. It is found in the secretory vesicle. The protein localises to the rhoptry. Its function is as follows. Participates in the formation of new permeability pathways in Plasmodium-infected erythrocytes enabling the uptake of nutrients from the blood plasma. The sequence is that of Cytoadherence-linked asexual protein 3.2 from Plasmodium falciparum.